The sequence spans 499 residues: Glutathione reductase, cytosolic (499 aa).

Positions 35, 36, 55, 72, 73, and 81 each coordinate FAD. Ser-35 is a binding site for glutathione. Cys-73 and Cys-78 form a disulfide bridge. A glutathione-binding site is contributed by Tyr-130. An FAD-binding site is contributed by Gly-146. Positions 211, 214, 217, 234, 240, and 297 each coordinate NADP(+). Residues Asp-338 and Thr-346 each coordinate FAD. An NADP(+)-binding site is contributed by Ala-376. Position 472 (His-472) interacts with FAD. His-472 (proton acceptor) is an active-site residue.

This sequence belongs to the class-I pyridine nucleotide-disulfide oxidoreductase family. As to quaternary structure, homodimer. Requires FAD as cofactor.

Its subcellular location is the cytoplasm. The catalysed reaction is 2 glutathione + NADP(+) = glutathione disulfide + NADPH + H(+). Catalyzes the reduction of glutathione disulfide (GSSG) to reduced glutathione (GSH). Constitutes the major mechanism to maintain a high GSH:GSSG ratio in the cytosol. The protein is Glutathione reductase, cytosolic of Arabidopsis thaliana (Mouse-ear cress).